The primary structure comprises 198 residues: MEHLLSIFVKSVFIENMALSFFLGMCTFLAVSKKVSTAFGLGIAVIVVLGIAVPVNQLVYTHILKDGVLVDGVDLSFLNFITFIGVIAALVQILEMILDKFFPALYSALGIFLPLITVNCAIFGGVSFMVQREYDLVESVVYGIGAGTGWMLAIVALAGLTEKMKYSDVPAGLRGLGITFITVGLMALGFMSFSGIQL.

The next 6 membrane-spanning stretches (helical) occupy residues 11–31, 35–55, 77–97, 110–130, 140–160, and 176–196; these read SVFI…FLAV, VSTA…AVPV, FLNF…LEMI, GIFL…SFMV, VVYG…LAGL, and LGIT…FSGI.

Belongs to the NqrDE/RnfAE family. Composed of six subunits; NqrA, NqrB, NqrC, NqrD, NqrE and NqrF.

The protein localises to the cell inner membrane. It carries out the reaction a ubiquinone + n Na(+)(in) + NADH + H(+) = a ubiquinol + n Na(+)(out) + NAD(+). Its function is as follows. NQR complex catalyzes the reduction of ubiquinone-1 to ubiquinol by two successive reactions, coupled with the transport of Na(+) ions from the cytoplasm to the periplasm. NqrA to NqrE are probably involved in the second step, the conversion of ubisemiquinone to ubiquinol. The protein is Na(+)-translocating NADH-quinone reductase subunit E of Haemophilus ducreyi (strain 35000HP / ATCC 700724).